Here is a 258-residue protein sequence, read N- to C-terminus: Cell division protein FtsQ (258 aa).

Residues M1–T29 lie on the Cytoplasmic side of the membrane. Residues A30–L50 form a helical membrane-spanning segment. Residues P51–S258 are Periplasmic-facing. One can recognise a POTRA domain in the interval Y57–R127.

This sequence belongs to the FtsQ/DivIB family. FtsQ subfamily. As to quaternary structure, part of a complex composed of FtsB, FtsL and FtsQ.

It localises to the cell inner membrane. Essential cell division protein. May link together the upstream cell division proteins, which are predominantly cytoplasmic, with the downstream cell division proteins, which are predominantly periplasmic. May control correct divisome assembly. This chain is Cell division protein FtsQ, found in Alcanivorax borkumensis (strain ATCC 700651 / DSM 11573 / NCIMB 13689 / SK2).